Reading from the N-terminus, the 559-residue chain is Urocanate hydratase (559 aa).

NAD(+)-binding positions include 53–54 (GG), Gln131, 177–179 (GMG), Glu197, Arg202, 243–244 (NA), 264–268 (QTSAH), 274–275 (YL), and Tyr323. Cys411 is a catalytic residue. Gly493 serves as a coordination point for NAD(+).

The protein belongs to the urocanase family. The cofactor is NAD(+).

Its subcellular location is the cytoplasm. The enzyme catalyses 4-imidazolone-5-propanoate = trans-urocanate + H2O. The protein operates within amino-acid degradation; L-histidine degradation into L-glutamate; N-formimidoyl-L-glutamate from L-histidine: step 2/3. Its function is as follows. Catalyzes the conversion of urocanate to 4-imidazolone-5-propionate. The chain is Urocanate hydratase from Pseudomonas paraeruginosa (strain DSM 24068 / PA7) (Pseudomonas aeruginosa (strain PA7)).